We begin with the raw amino-acid sequence, 238 residues long: Cysteine-rich venom protein pseudecin (238 aa).

An N-terminal signal peptide occupies residues 1–19 (MIAFIVLLSLAAVLQQSSG). The propeptide occupies 20–28 (TVDFASESS). The 127-residue stretch at 38–164 (VDKHNALRRS…SSKYLYVCQY (127 aa)) folds into the SCP domain. Residues Thr-51 and Ser-106 each contribute to the Zn(2+) site. Disulfide bonds link Cys-75–Cys-153, Cys-92–Cys-165, Cys-148–Cys-162, Cys-184–Cys-191, Cys-187–Cys-196, Cys-200–Cys-233, Cys-209–Cys-227, and Cys-218–Cys-231. Positions 200-233 (CNYNNDFSNCKSLAKKSKCQTEWIKKKCPASCFC) constitute a ShKT domain.

Expressed by the venom gland.

The protein localises to the secreted. In terms of biological role, blocks olfactory (CNGA2) and retinal (CNGA1) CNG channel currents. Is really less potent that Pseudechetoxin. Does not affect neither depolarization- nor caffeine-induced contraction of smooth muscle. The sequence is that of Cysteine-rich venom protein pseudecin from Pseudechis porphyriacus (Red-bellied black snake).